The following is a 443-amino-acid chain: Serine/threonine-protein phosphatase 2A 55 kDa regulatory subunit B beta isoform (443 aa).

4 WD repeats span residues 22–61, 87–128, 171–209, and 220–260; these read TEAD…KNQV, EIEE…KRPE, AHTY…QSFN, and ELTE…LCDR. Position 275 is a phosphoserine (S275). WD repeat units follow at residues 279 to 317, 334 to 375, and 410 to 442; these read EIIS…RPIE, ENDC…DVTL, and DFSK…QDKV. Position 295 is a phosphotyrosine (Y295). The residue at position 298 (T298) is a Phosphothreonine.

The protein belongs to the phosphatase 2A regulatory subunit B family. In terms of assembly, PP2A consists of a common heterodimeric core enzyme, composed of a 36 kDa catalytic subunit (subunit C) and a 65 kDa constant regulatory subunit (PR65 or subunit A), that associates with a variety of regulatory subunits. Proteins that associate with the core dimer include three families of regulatory subunits B (the R2/B/PR55/B55, R3/B''/PR72/PR130/PR59 and R5/B'/B56 families), the 48 kDa variable regulatory subunit, viral proteins, and cell signaling molecules. Interacts with TOMM22. Interacts with IER5 (via N- and C-terminal regions).

The protein resides in the cytoplasm. It is found in the cytoskeleton. Its subcellular location is the membrane. In terms of biological role, the B regulatory subunit might modulate substrate selectivity and catalytic activity, and might also direct the localization of the catalytic enzyme to a particular subcellular compartment. This chain is Serine/threonine-protein phosphatase 2A 55 kDa regulatory subunit B beta isoform (PPP2R2B), found in Bos taurus (Bovine).